The primary structure comprises 189 residues: Elongation factor P (189 aa).

K35 bears the N6-(3,6-diaminohexanoyl)-5-hydroxylysine mark.

This sequence belongs to the elongation factor P family. In terms of processing, may be beta-lysylated on the epsilon-amino group of Lys-35 by the combined action of EpmA and EpmB, and then hydroxylated on the C5 position of the same residue by EpmC (if this protein is present). Lysylation is critical for the stimulatory effect of EF-P on peptide-bond formation. The lysylation moiety may extend toward the peptidyltransferase center and stabilize the terminal 3-CCA end of the tRNA. Hydroxylation of the C5 position on Lys-35 may allow additional potential stabilizing hydrogen-bond interactions with the P-tRNA.

It is found in the cytoplasm. The protein operates within protein biosynthesis; polypeptide chain elongation. Its function is as follows. Involved in peptide bond synthesis. Alleviates ribosome stalling that occurs when 3 or more consecutive Pro residues or the sequence PPG is present in a protein, possibly by augmenting the peptidyl transferase activity of the ribosome. Modification of Lys-35 is required for alleviation. The protein is Elongation factor P of Wigglesworthia glossinidia brevipalpis.